Here is a 311-residue protein sequence, read N- to C-terminus: Mitoferrin (311 aa).

Solcar repeat units lie at residues 15 to 102 (HSIP…MKSF), 111 to 195 (EHTL…WQQV), and 202 to 302 (YDPK…FKFM). 6 helical membrane-spanning segments follow: residues 17 to 36 (IPVHLAAGALAGAVEHCVMF), 77 to 96 (GVNAVAAGSMPAHALYFTVY), 112 to 132 (HTLAYGASGVVATLIHDAVMN), 170 to 189 (SYTTQLAMNVPFQAIHFMGY), 204 to 223 (PKSHLIAGGLAGGLAAAVTT), and 277 to 296 (GLQARVIFQVPATALSWSVY).

This sequence belongs to the mitochondrial carrier (TC 2.A.29) family.

Its subcellular location is the mitochondrion inner membrane. In terms of biological role, mitochondrial iron transporter that mediates iron uptake. Probably required for heme synthesis of hemoproteins and Fe-S cluster assembly. In Caenorhabditis briggsae, this protein is Mitoferrin.